We begin with the raw amino-acid sequence, 1331 residues long: NPC1-like intracellular cholesterol transporter 1 (1331 aa).

The signal sequence occupies residues 1-20 (MAAAWLGWLLWALLLSAAQG). Over 21-282 (ELYTPKHEAG…RPSFYMGRMP (262 aa)) the chain is Extracellular. 9 disulfide bridges follow: Cys32-Cys90, Cys38-Cys56, Cys77-Cys125, Cys91-Cys129, Cys113-Cys254, Cys116-Cys172, Cys189-Cys197, Cys243-Cys259, and Cys256-Cys263. N-linked (GlcNAc...) asparagine glycosylation is found at Asn53 and Asn85. Asn138 is a glycosylation site (N-linked (GlcNAc...) asparagine). Residue Asn244 is glycosylated (N-linked (GlcNAc...) asparagine). Residues 283 to 303 (GWLALIIIFTAVFVLLSAVLV) traverse the membrane as a helical segment. The Cytoplasmic segment spans residues 304–352 (RLRVVSNRNKNKAEGPQEAPKLPHKHKLSPHTILGRFFQNWGTRVASWP). The chain crosses the membrane as a helical span at residues 353 to 373 (LTVLALSFIVVIALAAGLTFI). Residues 374–632 (ELTTDPVELW…DEINRTTIQD (259 aa)) lie on the Extracellular side of the membrane. N-linked (GlcNAc...) asparagine glycosylation is found at Asn416, Asn431, Asn464, Asn479, Asn497, and Asn506. Cys471 and Cys485 are oxidised to a cystine. The cysteines at positions 525 and 542 are disulfide-linked. Residues Asn606 and Asn626 are each glycosylated (N-linked (GlcNAc...) asparagine). In terms of domain architecture, SSD spans 632 to 797 (DLPVFAVSYI…MTAFVALLSL (166 aa)). The helical transmembrane segment at 633–653 (LPVFAVSYIIVFLYISLALGS) threads the bilayer. Over 654 to 665 (YSRCSRVAVESK) the chain is Cytoplasmic. A helical membrane pass occupies residues 666–686 (ATLGLGGVIVVLGAVLAAMGF). At 687–696 (YSYLGVPSSL) the chain is on the extracellular side. The helical transmembrane segment at 697-717 (VIIQVVPFLVLAVGADNIFIF) threads the bilayer. Residues 718–742 (VLEYQRLPRMPGEQREAHIGRTLGS) are Cytoplasmic-facing. Residues 743–763 (VAPSMLLCSLSEAICFFLGAL) form a helical membrane-spanning segment. At 764–776 (TPMPAVRTFALTS) the chain is on the extracellular side. The helical transmembrane segment at 777 to 797 (GLAIILDFLLQMTAFVALLSL) threads the bilayer. Residues 798-846 (DSKRQEASRPDVLCCFSTRKLPPPKEKEGLLLRFFRKIYAPFLLHRFIR) lie on the Cytoplasmic side of the membrane. The chain crosses the membrane as a helical span at residues 847–867 (PVVMLLFLTLFGANLYLMCNI). At 868 to 1113 (NVGLDQELAL…QQYLTVLPEG (246 aa)) the chain is on the extracellular side. Residues Asn909 and Asn917 are each glycosylated (N-linked (GlcNAc...) asparagine). Disulfide bonds link Cys920-Cys925, Cys967-Cys1025, and Cys981-Cys990. Asn996, Asn1038, and Asn1076 each carry an N-linked (GlcNAc...) asparagine glycan. The helical transmembrane segment at 1114 to 1134 (IFTLALCFVPTFVVCYLLLGL) threads the bilayer. At 1135 to 1142 (DMCSGILN) the chain is on the cytoplasmic side. A helical membrane pass occupies residues 1143 to 1163 (LLSIIMILVDTIGLMAVWGIS). The Extracellular segment spans residues 1164 to 1165 (YN). A helical transmembrane segment spans residues 1166-1186 (AVSLINLVTAVGMSVEFVSHI). Over 1187 to 1206 (TRSFAVSTKPTRLERAKDAT) the chain is Cytoplasmic. A helical membrane pass occupies residues 1207–1227 (VFMGSAVFAGVAMTNFPGILI). The Extracellular portion of the chain corresponds to 1228-1242 (LGFAQAQLIQIFFFR). Residues 1243 to 1263 (LNLLITLLGLLHGLVFLPVVL) form a helical membrane-spanning segment. Residues 1264 to 1331 (SYLGPDVNQA…SSLPKSDQKF (68 aa)) lie on the Cytoplasmic side of the membrane.

This sequence belongs to the patched family. In terms of assembly, interacts with RAB11A, MYO5B and RAB11FIP2. Interaction with RAB11A, MYO5B and RAB11FIP2 is required for proper transport to the plasma membrane upon cholesterol depletion. Interacts with NPC2. Interacts with LIMA1. Post-translationally, highly glycosylated. In terms of tissue distribution, small intestine showed the highest level of expression. Expression in other tissues including gall bladder, liver, testis and stomach is also observed. Along the duodenum-ileum axis, the levels vary in different segments of the intestine with peak expression in the proximal jejunum. Protein expression is confined to the enterocyte. Discrete localization to the epithelial layer bordering the luminal space along the crypt-villus axis. Protein expression in the enterocyte is observed closest to the luminal space. Expression in enterocytes from the proximal (jejunum) but not in the distal (ileum) region.

The protein resides in the apical cell membrane. The protein localises to the cell membrane. The catalysed reaction is cholesterol(in) = cholesterol(out). It carries out the reaction sitosterol(out) = sitosterol(in). Functionally, plays a major role in cholesterol homeostasis. Critical for the uptake of cholesterol across the plasma membrane of the intestinal enterocyte. Involved in plant sterol absorption, it transports sitosterol, although at lower rates than cholesterol. Is the direct molecular target of ezetimibe, a drug that inhibits cholesterol absorption and is approved for the treatment of hypercholesterolemia. May have a function in the transport of multiple lipids and their homeostasis, thereby influencing lipid metabolism regulation. May be involved in caveolin trafficking from the plasma membrane. Acts as a negative regulator of NPC2 and down-regulates its expression and secretion by inhibiting its maturation and accelerating its degradation. This Rattus norvegicus (Rat) protein is NPC1-like intracellular cholesterol transporter 1.